The primary structure comprises 169 residues: Nucleoside diphosphate kinase 3 (169 aa).

Residues lysine 29, arginine 105, threonine 111, arginine 122, valine 129, and asparagine 132 each contribute to the ADP site. Catalysis depends on histidine 135, which acts as the Pros-phosphohistidine intermediate.

The protein belongs to the NDK family. Homohexamer. Interacts (via its N-terminal region) with KAT5; this interaction enables recruitment of NME3 at DNA damage sites where it plays a role in the repair of DNA. Found in association with several ciliary nephronophthisis proteins, including NEK8, CEP164, ANKS6. It depends on Mg(2+) as a cofactor.

It is found in the mitochondrion outer membrane. Its subcellular location is the cytoplasm. The protein resides in the cytoskeleton. It localises to the cilium basal body. The enzyme catalyses a 2'-deoxyribonucleoside 5'-diphosphate + ATP = a 2'-deoxyribonucleoside 5'-triphosphate + ADP. It carries out the reaction a ribonucleoside 5'-diphosphate + ATP = a ribonucleoside 5'-triphosphate + ADP. In terms of biological role, catalyzes the phosphorylation of ribonucleosides and deoxyribonucleoside diphosphates, other than ATP, into the corresponding triphosphates with ATP as the major phosphate donor. The ATP gamma phosphate is transferred to the nucleoside diphosphate beta phosphate via a ping-pong mechanism, using a phosphorylated active-site intermediate. Through the catalyzed exchange of gamma-phosphate between di- and triphosphonucleosides participates in regulation of intracellular nucleotide homeostasis. Inhibits granulocyte differentiation. May be required for ciliary function during renal development. Its function is as follows. Independently of its kinase activity, facilitates mitochondrial tethering prior to membrane fusion through its direct membrane-binding and hexamerization. Implicated in repair of both single- and double-stranded breaks in DNA through its association with the ribonucleotide reductase complex (RNR complex) via its interaction with the histone acetyltransferase KAT5, this interaction enables recruitment of NME3 at DNA damage sites where it plays a role in the repair of DNA, independently of its kinase activity. The protein is Nucleoside diphosphate kinase 3 (Nme3) of Mus musculus (Mouse).